We begin with the raw amino-acid sequence, 927 residues long: Tubulin monoglycylase TTLL3 (927 aa).

Positions 35–47 (RSQPSELRTNFSS) are enriched in polar residues. 2 disordered regions span residues 35–113 (RSQP…PQPV) and 194–227 (HPPGTALPAPQKDLDSSMLGDSDATEDEDEEENE). The segment covering 216-226 (DATEDEDEEEN) has biased composition (acidic residues). The TTL domain occupies 345–702 (VLKLVVKLEE…DRRLDRSCDT (358 aa)). ATP is bound by residues Lys-476, 482–483 (RG), 514–517 (QKYI), 527–529 (KFD), and 571–572 (CN). Position 482 (Arg-482) interacts with a protein. Asp-649, Glu-662, and Asn-664 together coordinate Mg(2+). Glu-662 provides a ligand contact to ATP. Disordered stretches follow at residues 735 to 799 (VPVG…SGKG) and 897 to 927 (EEGHRQRAAPRPSSAPGKGLSSTEPCSKTET). Positions 752-769 (LTQQGSGESKDSGSPTHR) are enriched in polar residues. The span at 776–788 (ARAESLEHTEKPE) shows a compositional bias: basic and acidic residues. Positions 916-927 (LSSTEPCSKTET) are enriched in polar residues.

Mg(2+) serves as cofactor. Highly expressed in brain and testis. Expressed in heart, kidney, liver, lung, muscle, spleen, trachea and colon. Expressed in sperm flagellum. In the brain, specifically expressed in ependymal cilia.

It localises to the cytoplasm. It is found in the cytoskeleton. The protein localises to the cell projection. Its subcellular location is the cilium. The protein resides in the cilium axoneme. It localises to the flagellum axoneme. The enzyme catalyses L-glutamyl-[protein] + glycine + ATP = glycyl-L-glutamyl-[protein] + ADP + phosphate + H(+). Its function is as follows. Monoglycylase which modifies alpha- and beta-tubulin, adding a single glycine on the gamma-carboxyl groups of specific glutamate residues to generate monoglycine side chains within the C-terminal tail of tubulin. Not involved in elongation step of the polyglycylation reaction. Preferentially glycylates a beta-tail peptide over the alpha-tail, although shifts its preference toward alpha-tail as beta-tail glutamylation increases. Competes with polyglutamylases for modification site on beta-tubulin substrate, thereby creating an anticorrelation between glycylation and glutamylation reactions. Together with TTLL8, mediates microtubule glycylation of primary and motile cilia, which is essential for their stability and maintenance. Involved in microtubule glycylation of primary cilia in colon which controls cell proliferation of epithelial cells and plays an essential role in colon cancer development. Together with TTLL8, glycylates sperm flagella which regulates axonemal dynein motor activity, thereby controlling flagellar beat, directional sperm swimming and male fertility. This is Tubulin monoglycylase TTLL3 from Mus musculus (Mouse).